Reading from the N-terminus, the 712-residue chain is uncharacterized protein (712 aa).

3 disordered regions span residues 1–46, 107–264, and 370–389; these read MAKI…NNLN, NIKP…IPQA, and QPQH…QQNQ. Composition is skewed to low complexity over residues 10–46, 107–143, and 161–173; these read INNS…NNLN, NIKP…SNSS, and TFDN…NSSN. Residues 178-187 are compositionally biased toward polar residues; the sequence is ISPTTSPQLE. 2 stretches are compositionally biased toward low complexity: residues 188–198 and 241–264; these read QHQQYQQQQHQ and PLQQ…IPQA.

This is an uncharacterized protein from Dictyostelium discoideum (Social amoeba).